The sequence spans 197 residues: Segregation and condensation protein B (197 aa).

The protein belongs to the ScpB family. In terms of assembly, homodimer. Homodimerization may be required to stabilize the binding of ScpA to the Smc head domains. Component of a cohesin-like complex composed of ScpA, ScpB and the Smc homodimer, in which ScpA and ScpB bind to the head domain of Smc. The presence of the three proteins is required for the association of the complex with DNA.

It is found in the cytoplasm. Functionally, participates in chromosomal partition during cell division. May act via the formation of a condensin-like complex containing Smc and ScpA that pull DNA away from mid-cell into both cell halves. In Halalkalibacterium halodurans (strain ATCC BAA-125 / DSM 18197 / FERM 7344 / JCM 9153 / C-125) (Bacillus halodurans), this protein is Segregation and condensation protein B.